Consider the following 266-residue polypeptide: MLRLLVFTSLVLYGHSTQDFPETNARVVGGTAVSKNSWPSQISLQYKSGSSWYHTCGGTLIKQKWVMTAAHCVDSQMTFRVVLGDHNLSQNDGTEQYISVQKIVVHPSWNSNNVAAGYDIAVLRLAQSATLNSYVQLGVLPQSGTILANNTPCYITGWGRTKTNGQLAQTLQQAYLPSVDYATCSSSSYWGSTVKTTMVCAGGDGVRAGCQGDSGGPLHCLVNGQYAVHGVTSFVSSLGCNVSKKPTVFTRVSAYISWINNAIASN.

The signal sequence occupies residues 1–16 (MLRLLVFTSLVLYGHS). A propeptide spans 17 to 26 (TQDFPETNAR) (activation peptide). Residues 27–264 (VVGGTAVSKN…YISWINNAIA (238 aa)) enclose the Peptidase S1 domain. A disulfide bond links Cys-56 and Cys-72. His-71 functions as the Charge relay system in the catalytic mechanism. Ca(2+)-binding residues include Asp-85, Asn-87, Gln-90, and Glu-95. A glycan (N-linked (GlcNAc...) asparagine) is linked at Asn-87. Residue Asp-119 is the Charge relay system of the active site. 3 cysteine pairs are disulfide-bonded: Cys-153–Cys-220, Cys-184–Cys-200, and Cys-210–Cys-240. Ser-214 serves as the catalytic Charge relay system. Asn-241 is a glycosylation site (N-linked (GlcNAc...) asparagine).

It belongs to the peptidase S1 family. Elastase subfamily. The cofactor is Ca(2+). In terms of tissue distribution, pancreas.

The protein resides in the secreted. The enzyme catalyses Hydrolysis of proteins, including elastin. Preferential cleavage: Ala-|-Xaa.. Its function is as follows. Serine proteases that hydrolyze many proteins in addition to elastin. This is Chymotrypsin-like elastase family member 1 (CELA1) from Bos taurus (Bovine).